The chain runs to 469 residues: MNSVSPLATQYGSPKGSQQMENRSTQSGGHEQRKMGHQDATLDGEADEVDKLKSKLLSAWNNVKYGWSVKMKTTFSRSAPVYLLGERYFFRLDDEIERFQKDFVSRVWLTYRRDFPALEGTALTTDCGWGCMIRSGQMLLAQGLLLHLLSREWTWSEALYRHFVEMEPIRSSSPPSMPLSSLATGHSAGDYQPHTQCSGAPHGDQVHRNIMRWFSDHPGSPFGLHQLVTLGSIFGKKAGDWYGPSIVAHIIKKAIETSSEVPELSVYVSQDCTVYKADIEQLFAGDVPHAETSRGAGKAVIILVPVRLGGETFNPVYKHCLKEFLRMPSCLGIIGGKPKHSLYFIGYQDNYLLYLDPHYCQPYIDTSKNDFPLESFHCNSPRKISITRMDPSCTFAFYAKNSEDFGKLCDHLMKVLHSPRAEEKYPIFSISEGQAQEYAEGPQSSSHPPVCRKKGPLVKRPSSDEFEFL.

A compositionally biased stretch (polar residues) spans 1 to 29 (MNSVSPLATQYGSPKGSQQMENRSTQSGG). The segment at 1–41 (MNSVSPLATQYGSPKGSQQMENRSTQSGGHEQRKMGHQDAT) is disordered. Residue C131 is the Nucleophile of the active site. The segment at 169–191 (IRSSSPPSMPLSSLATGHSAGDY) is disordered. Over residues 171–182 (SSSPPSMPLSSL) the composition is skewed to low complexity. Active-site residues include D356 and H358. The tract at residues 436–469 (QEYAEGPQSSSHPPVCRKKGPLVKRPSSDEFEFL) is disordered.

It belongs to the peptidase C54 family.

It localises to the cytoplasm. It carries out the reaction [protein]-C-terminal L-amino acid-glycyl-phosphatidylethanolamide + H2O = [protein]-C-terminal L-amino acid-glycine + a 1,2-diacyl-sn-glycero-3-phosphoethanolamine. The enzyme catalyses [protein]-C-terminal L-amino acid-glycyl-phosphatidylserine + H2O = [protein]-C-terminal L-amino acid-glycine + a 1,2-diacyl-sn-glycero-3-phospho-L-serine. Its function is as follows. Cysteine protease that plays a key role in autophagy by mediating both proteolytic activation and delipidation of ATG8 family proteins. The protease activity is required for proteolytic activation of ATG8 family proteins to reveal a C-terminal glycine. Exposure of the glycine at the C-terminus is essential for ATG8 proteins conjugation to phosphatidylethanolamine (PE) and insertion to membranes, which is necessary for autophagy. In addition to the protease activity, also mediates delipidation of ATG8 family proteins. Catalyzes delipidation of PE-conjugated forms of ATG8 proteins during macroautophagy. Also involved in non-canonical autophagy, a parallel pathway involving conjugation of ATG8 proteins to single membranes at endolysosomal compartments, by catalyzing delipidation of ATG8 proteins conjugated to phosphatidylserine (PS). The sequence is that of Cysteine protease ATG4D from Xenopus laevis (African clawed frog).